Reading from the N-terminus, the 358-residue chain is Alanine racemase (358 aa).

K35 acts as the Proton acceptor; specific for D-alanine in catalysis. Residue K35 is modified to N6-(pyridoxal phosphate)lysine. R130 contacts substrate. The active-site Proton acceptor; specific for L-alanine is Y255. A substrate-binding site is contributed by M303.

This sequence belongs to the alanine racemase family. Requires pyridoxal 5'-phosphate as cofactor.

It carries out the reaction L-alanine = D-alanine. It functions in the pathway amino-acid biosynthesis; D-alanine biosynthesis; D-alanine from L-alanine: step 1/1. Functionally, catalyzes the interconversion of L-alanine and D-alanine. May also act on other amino acids. This is Alanine racemase (alr) from Shewanella loihica (strain ATCC BAA-1088 / PV-4).